Reading from the N-terminus, the 2032-residue chain is Cytoskeleton-associated protein 5 (2032 aa).

3 TOG regions span residues 1–223 (MGDD…KLPT), 268–502 (YELL…LVHG), and 588–817 (SIEV…GQSP). At Lys-48 the chain carries N6-acetyllysine. HEAT repeat units lie at residues 159-197 (IISL…WNRD), 356-394 (GQYA…TTTL), and 434-472 (KSLL…VVGE). A disordered region spans residues 501 to 579 (HGKKSGLATE…GTKNKKGLET (79 aa)). An HEAT 4 repeat occupies 750–788 (ELNVKAFISNVKTALAATNPAVRTSAITLLGVMYLYVGP). The disordered stretch occupies residues 811–848 (KMQGQSPPAPTRGIAKHSTSATDEGEDGEEPGEGGNDV). Ser-816 is subject to Phosphoserine. Positions 833 to 842 (DEGEDGEEPG) are enriched in acidic residues. TOG regions lie at residues 853 to 1081 (PRIE…ANMP) and 1193 to 1428 (IEQL…KRPS). 3 HEAT repeats span residues 855 to 893 (IEIS…EAKF), 936 to 974 (RQHV…QTGM), and 1013 to 1051 (PTDL…HLGY). Positions 1078-1095 (ANMPSKPAAPAKAMSKPM) are enriched in low complexity. Positions 1078–1156 (ANMPSKPAAP…KTTLKEDDDK (79 aa)) are disordered. 3 HEAT repeats span residues 1284-1322 (ENEA…VYPA), 1324-1357 (KMFP…SYGM), and 1361-1399 (QPTP…VHGD). Residues 1420-1459 (IKRSAKRPSAAPVKQAEEKPQRTQNINSNANMLRKGPAED) form a disordered region. Polar residues predominate over residues 1441–1450 (RTQNINSNAN). Residue Ser-1469 is modified to Phosphoserine. Residues 1801–1822 (SMDQTGSKSDKETEKGASRIDE) form a disordered region. A compositionally biased stretch (basic and acidic residues) spans 1808–1822 (KSDKETEKGASRIDE). At Ser-1861 the chain carries Phosphoserine. Disordered stretches follow at residues 1893-1926 (SKGR…GNTN) and 1948-2032 (LDNT…SSRK). Low complexity predominate over residues 1909-1921 (VTCVPTPTSTVSS). An interaction with TACC3 region spans residues 1932 to 1957 (PSVYLERLKILRQRCGLDNTKQDDRP). Residues 1972 to 1983 (ASSTDMLHSKLS) are compositionally biased toward polar residues. Basic and acidic residues predominate over residues 1984-1997 (QLRESREQHQHSDL). Residues 2002 to 2015 (THSAGTMTSSSSTT) show a composition bias toward low complexity. Positions 2018–2032 (DDLKKRLERIKSSRK) are enriched in basic and acidic residues.

Belongs to the TOG/XMAP215 family. As to quaternary structure, interacts with TACC1. Interacts with HNRNPA2B1. Interacts with TACC3 independently of clathrin. Interacts with TACC3 and clathrin forming the TACC3/ch-TOG/clathrin complex located at spindle inter-microtubules bridges. Interacts with NDC80; indicative for an association with the NDC80 complex. Interacts with SLAIN2. Interacts with SLAIN1.

It is found in the cytoplasm. The protein resides in the cytoskeleton. It localises to the microtubule organizing center. Its subcellular location is the centrosome. The protein localises to the spindle pole. It is found in the spindle. The protein resides in the chromosome. It localises to the centromere. Its subcellular location is the kinetochore. Its function is as follows. Binds to the plus end of microtubules and regulates microtubule dynamics and microtubule organization. Acts as a processive microtubule polymerase. Promotes cytoplasmic microtubule nucleation and elongation. Plays a major role in organizing spindle poles. In spindle formation protects kinetochore microtubules from depolymerization by KIF2C and has an essential role in centrosomal microtubule assembly independently of KIF2C activity. Contributes to centrosome integrity. Acts as a component of the TACC3/ch-TOG/clathrin complex proposed to contribute to stabilization of kinetochore fibers of the mitotic spindle by acting as inter-microtubule bridge. The TACC3/ch-TOG/clathrin complex is required for the maintenance of kinetochore fiber tension. Enhances the strength of NDC80 complex-mediated kinetochore-tip microtubule attachments. This Mus musculus (Mouse) protein is Cytoskeleton-associated protein 5.